The chain runs to 345 residues: Trans-3-hydroxy-L-proline dehydratase (345 aa).

The Proton acceptor role is filled by Ser-90. Substrate-binding positions include 91 to 92 (GS), Asp-252, and 257 to 258 (GT).

The protein belongs to the proline racemase family.

The catalysed reaction is trans-3-hydroxy-L-proline = 1-pyrroline-2-carboxylate + H2O. Catalyzes the dehydration of trans-3-hydroxy-L-proline (t3LHyp) to Delta(1)-pyrroline-2-carboxylate (Pyr2C). May be involved in a degradation pathway that converts t3LHyp to L-proline, which would allow S.novella to grow on t3LHyp as a sole carbon source. The polypeptide is Trans-3-hydroxy-L-proline dehydratase (Ancylobacter novellus (strain ATCC 8093 / DSM 506 / JCM 20403 / CCM 1077 / IAM 12100 / NBRC 12443 / NCIMB 10456) (Starkeya novella)).